The sequence spans 1092 residues: Rho GTPase-activating protein 7 (1092 aa).

The SAM domain maps to 11–78 (LTQIEAKEAC…LNKCAVMKLE (68 aa)). Residues serine 86, serine 89, and serine 129 each carry the phosphoserine modification. 4 disordered regions span residues 121–179 (PKQD…DATT), 297–330 (RSVS…TRSL), 409–434 (GPGH…NSSS), and 492–553 (SDEG…SGVG). A compositionally biased stretch (polar residues) spans 130–143 (PDNSRLQSATSHES). Low complexity-rich tracts occupy residues 154 to 174 (VASV…AAHS) and 299 to 325 (VSNS…SPVT). Residues 275–448 (QLNCVEISAL…RLSIYDNVPG (174 aa)) are focal adhesion-targeting (FAT). A Phosphoserine modification is found at serine 322. Positions 415–426 (LRRENSHDSPKE) are enriched in basic and acidic residues. The segment covering 500-512 (ALDSVSPCPSSPK) has biased composition (polar residues). Positions 514-526 (IHLDVDHDRRTPS) are enriched in basic and acidic residues. Polar residues predominate over residues 527–536 (DLDSTGNSLN). The interval 615-637 (KHGFSWAVPKFMKRIKVPDYKDR) is polybasic cluster (PBR). Positions 642-848 (VPLTVNVQRS…HMIAECKKLF (207 aa)) constitute a Rho-GAP domain. The region spanning 878-1085 (NSDQPADYRH…RDSFSNQNTE (208 aa)) is the START domain.

Interacts with EF1A1, facilitates EF1A1 distribution to the membrane periphery and ruffles upon growth factor stimulation and suppresses cell migration. Interacts with tensin TNS1 (via N-terminus); the interaction is decreased by phosphorylation of TNS1. Interacts with TNS3 and PTEN; in resting cells, interacts with TNS3 (via C2 tensin-type domain) but, following growth factor stimulation, TNS3 and PTEN are phosphorylated which leads to weakened interaction with TNS3 and enhanced interaction with PTEN. Interacts (via C-terminus) with tensin TNS4 (via SH2 domain); the interaction is independent of tyrosine phosphorylation of DLC1. In terms of tissue distribution, widely expressed with the highest levels in heart, liver and lung.

Its subcellular location is the cytoplasm. It is found in the cell junction. It localises to the focal adhesion. The protein localises to the membrane. Its function is as follows. Functions as a GTPase-activating protein for the small GTPases RHOA, RHOB, RHOC and CDC42, terminating their downstream signaling. This induces morphological changes and detachment through cytoskeletal reorganization, playing a critical role in biological processes such as cell migration and proliferation. Also functions in vivo as an activator of the phospholipase PLCD1. Active DLC1 increases cell migration velocity but reduces directionality. Required for growth factor-induced epithelial cell migration; in resting cells, interacts with TNS3 while PTEN interacts with the p85 regulatory subunit of the PI3K kinase complex but growth factor stimulation induces phosphorylation of TNS3 and PTEN, causing them to change their binding preference so that PTEN interacts with DLC1 and TNS3 interacts with p85. The PTEN-DLC1 complex translocates to the posterior of migrating cells to activate RHOA while the TNS3-p85 complex translocates to the leading edge of migrating cells to promote RAC1 activation. In Mus musculus (Mouse), this protein is Rho GTPase-activating protein 7 (Dlc1).